Reading from the N-terminus, the 312-residue chain is MGLLDSEPGSVLNAMSTAFNDTVEFYRWTWTIADKRVADWPLMQSPWPTISISTLYLLFVWLGPKWMKDREPFQMRLVLIIYNFGMVLLNLFIFRELFMGSYNAGYSYICQSVDYSNDVNEVRIAGALWWYFVSKGVEYLDTVFFILRKKNNQVSFLHVYHHCTMFTLWWIGIKWVAGGQAFFGAQMNSFIHVIMYSYYGLTAFGPWIQKYLWWKRYLTMLQLVQFHVTIGHTALSLYTDCPFPKWMHWALIAYAISFIFLFLNFYTRTYNEPKQSKTGKTATNGISSNGVNKSEKALENGKPQKNGKPKGE.

Asparagine 20 carries an N-linked (GlcNAc...) asparagine glycan. Helical transmembrane passes span 42–62, 78–98, 127–147, 165–185, 188–208, 217–237, and 246–266; these read LMQS…FVWL, VLII…RELF, ALWW…FFIL, MFTL…FFGA, NSFI…GPWI, YLTM…ALSL, and WMHW…LNFY. Polar residues predominate over residues 273–292; the sequence is PKQSKTGKTATNGISSNGVN. The segment at 273–312 is disordered; that stretch reads PKQSKTGKTATNGISSNGVNKSEKALENGKPQKNGKPKGE. Asparagine 292 carries an N-linked (GlcNAc...) asparagine glycan. Positions 308–312 match the Di-lysine motif motif; that stretch reads KPKGE.

Belongs to the ELO family. ELOVL4 subfamily. In terms of assembly, oligomer. Post-translationally, N-glycosylated. In terms of tissue distribution, expressed in the retina, exclusively in photoreceptor cells and in the brain, skin, testis and lens.

The protein resides in the endoplasmic reticulum membrane. It catalyses the reaction a very-long-chain acyl-CoA + malonyl-CoA + H(+) = a very-long-chain 3-oxoacyl-CoA + CO2 + CoA. The enzyme catalyses hexacosanoyl-CoA + malonyl-CoA + H(+) = 3-oxooctacosanyol-CoA + CO2 + CoA. It carries out the reaction octacosanoyl-CoA + malonyl-CoA + H(+) = 3-oxo-triacontanoyl-CoA + CO2 + CoA. The catalysed reaction is triacontanoyl-CoA + malonyl-CoA + H(+) = 3-oxo-dotriacontanoyl-CoA + CO2 + CoA. It catalyses the reaction (19Z,22Z,25Z,28Z,31Z)-tetratriacontapentaenoyl-CoA + malonyl-CoA + H(+) = 3-oxo-(21Z,24Z,27Z,30Z,33Z)-hexatriacontapentaenoyl-CoA + CO2 + CoA. The enzyme catalyses (4Z,7Z,10Z,13Z,16Z,19Z)-docosahexaenoyl-CoA + malonyl-CoA + H(+) = 3-oxo-(6Z,9Z,12Z,15Z,18Z,21Z)-tetracosahexaenoyl-CoA + CO2 + CoA. It carries out the reaction (7Z,10Z,13Z,16Z)-docosatetraenoyl-CoA + malonyl-CoA + H(+) = (9Z,12Z,15Z,18Z)-3-oxotetracosatetraenoyl-CoA + CO2 + CoA. The catalysed reaction is (11Z,14Z,17Z,20Z,23Z)-hexacosapentaenoyl-CoA + malonyl-CoA + H(+) = 3-oxo-(13Z,16Z,19Z,22Z,25Z)-octacosapentaenoyl-CoA + CO2 + CoA. It catalyses the reaction (13Z,16Z,19Z,22Z,25Z)-octacosapentaenoyl-CoA + malonyl-CoA + H(+) = 3-oxo-(15Z,18Z,21Z,24Z,27Z)-triacontapentaenoyl-CoA + CO2 + CoA. The enzyme catalyses (15Z,18Z,21Z,24Z,27Z)-triacontapentaenoyl-CoA + malonyl-CoA + H(+) = 3-oxo-(17Z,20Z,23Z,26Z,29Z)-dotriacontapentaenoyl-CoA + CO2 + CoA. It carries out the reaction (17Z,20Z,23Z,26Z,29Z)-dotriacontapentaenoyl-CoA + malonyl-CoA + H(+) = 3-oxo-(19Z,22Z,25Z,28Z,31Z)-tetratriacontapentaenoyl-CoA + CO2 + CoA. The catalysed reaction is (21Z,24Z,27Z,30Z,33Z)-hexatriacontapentaenoyl-CoA + malonyl-CoA + H(+) = 3-oxo-(23Z,26Z,29Z,32Z,35Z)-octatriacontapentaenoyl-CoA + CO2 + CoA. It catalyses the reaction (11Z,14Z,17Z,20Z)-hexacosatetraenoyl-CoA + malonyl-CoA + H(+) = (13Z,16Z,19Z,22Z)-3-oxooctacosatetraenoyl-CoA + CO2 + CoA. The enzyme catalyses (13Z,16Z,19Z,22Z)-octacosatetraenoyl-CoA + malonyl-CoA + H(+) = 3-oxo-(15Z,18Z,21Z,24Z)-triacontatetraenoyl-CoA + CO2 + CoA. It carries out the reaction (15Z,18Z,21Z,24Z)-triacontatetraenoyl-CoA + malonyl-CoA + H(+) = 3-oxo-(17Z,20Z,23Z,26Z)-dotriacontatetraenoyl-CoA + CO2 + CoA. The catalysed reaction is (17Z,20Z,23Z,26Z)-dotriacontatetraenoyl-CoA + malonyl-CoA + H(+) = 3-oxo-(19Z,22Z,25Z,28Z)-tetratriacontatetraenoyl-CoA + CO2 + CoA. It catalyses the reaction (19Z,22Z,25Z,28Z)-tetratriacontatetraenoyl-CoA + malonyl-CoA + H(+) = 3-oxo-(21Z,24Z,27Z,30Z)-hexatriacontatetraenoyl-CoA + CO2 + CoA. The enzyme catalyses (21Z,24Z,27Z,30Z)-hexatriacontatetraenoyl-CoA + malonyl-CoA + H(+) = 3-oxo-(23Z,26Z,29Z,32Z)-octatriacontatetraenoyl-CoA + CO2 + CoA. It carries out the reaction (6Z,9Z,12Z,15Z,18Z,21Z)-tetracosahexaenoyl-CoA + malonyl-CoA + H(+) = 3-oxo-(8Z,11Z,14Z,17Z,20Z,23Z)-hexacosahexaenoyl-CoA + CO2 + CoA. The catalysed reaction is (8Z,11Z,14Z,17Z,20Z,23Z)-hexacosahexaenoyl-CoA + malonyl-CoA + H(+) = 3-oxo-(10Z,13Z,16Z,19Z,22Z,25Z)-octacosahexaenoyl-CoA + CO2 + CoA. It catalyses the reaction (10Z,13Z,16Z,19Z,22Z,25Z)-octacosahexaenoyl-CoA + malonyl-CoA + H(+) = 3-oxo-(12Z,15Z,18Z,21Z,24Z,27Z)-triacontahexaenoyl-CoA + CO2 + CoA. The enzyme catalyses (12Z,15Z,18Z,21Z,24Z,27Z)-triacontahexaenoyl-CoA + malonyl-CoA + H(+) = 3-oxo-(14Z,17Z,20Z,23Z,26Z,29Z)-dotriacontahexaenoyl-CoA + CO2 + CoA. It carries out the reaction (14Z,17Z,20Z,23Z,26Z,29Z)-dotriacontahexaenoyl-CoA + malonyl-CoA + H(+) = 3-oxo-(16Z,19Z,22Z,25Z,28Z,31Z)-tetratriacontahexaenoyl-CoA + CO2 + CoA. The catalysed reaction is (16Z,19Z,22Z,25Z,28Z,31Z)-tetratriacontahexaenoyl-CoA + malonyl-CoA + H(+) = 3-oxo-(18Z,21Z,24Z,27Z,30Z,33Z)-hexatriacontahexaenoyl-CoA + CO2 + CoA. It catalyses the reaction (9Z,12Z,15Z,18Z,21Z)-tetracosapentaenoyl-CoA + malonyl-CoA + H(+) = 3-oxo-(11Z,14Z,17Z,20Z,23Z)-hexacosapentaenoyl-CoA + CO2 + CoA. The protein operates within lipid metabolism; fatty acid biosynthesis. In terms of biological role, catalyzes the first and rate-limiting reaction of the four reactions that constitute the long-chain fatty acids elongation cycle. This endoplasmic reticulum-bound enzymatic process allows the addition of 2 carbons to the chain of long- and very long-chain fatty acids (VLCFAs) per cycle. Condensing enzyme that catalyzes the synthesis of very long chain saturated (VLC-SFA) and polyunsaturated (PUFA) fatty acids that are involved in multiple biological processes as precursors of membrane lipids and lipid mediators. May play a critical role in early brain and skin development. In Mus musculus (Mouse), this protein is Very long chain fatty acid elongase 4.